We begin with the raw amino-acid sequence, 155 residues long: Transcription antitermination protein NusB (155 aa).

The protein belongs to the NusB family.

Involved in transcription antitermination. Required for transcription of ribosomal RNA (rRNA) genes. Binds specifically to the boxA antiterminator sequence of the ribosomal RNA (rrn) operons. The polypeptide is Transcription antitermination protein NusB (Azoarcus sp. (strain BH72)).